A 218-amino-acid chain; its full sequence is Oxaloacetate decarboxylase, mitochondrial (218 aa).

The N-terminal 18 residues, 1–18, are a transit peptide targeting the mitochondrion; the sequence is MNKFWETGRKIVAVGRNY. The Mg(2+) site is built by Glu-63, Glu-65, and Asp-94.

The protein belongs to the FAH family. As to quaternary structure, homodimer. The cofactor is Mg(2+). Mn(2+) serves as cofactor.

The protein resides in the mitochondrion. It localises to the cytoplasm. Its subcellular location is the cytosol. It catalyses the reaction a 3-acylpyruvate + H2O = a carboxylate + pyruvate + H(+). It carries out the reaction acetylpyruvate + H2O = acetate + pyruvate + H(+). The catalysed reaction is 3-fumarylpyruvate + H2O = fumarate + pyruvate + H(+). The enzyme catalyses oxaloacetate + H(+) = pyruvate + CO2. Its function is as follows. Mitochondrial protein that acts as an oxaloacetate decarboxylase (ODx), catalyzing the decarboxylation of oxaloacetate (OAA) to pyruvate and CO(2), and as such is likely a regulatory enzyme in the TCA cycle. Also displays acylpyruvase activity, being able to hydrolyze acetylpyruvate and fumarylpyruvate in vitro. The polypeptide is Oxaloacetate decarboxylase, mitochondrial (fahd1) (Dictyostelium discoideum (Social amoeba)).